Consider the following 226-residue polypeptide: 26S proteasome non-ATPase regulatory subunit 10 (226 aa).

The required for nuclear localization stretch occupies residues 1 to 37 (MEGCVSNLMVCNLAYSGKLEELKESILADKSLATRTD). The interval 1-71 (MEGCVSNLMV…LGVPVNDKDD (71 aa)) is interaction with RB1. ANK repeat units follow at residues 3 to 36 (GCVSNLMVCNLAYSGKLEELKESILADKSLATRT), 37 to 69 (DQDSRTALHWACSAGHTEIVEFLLQLGVPVNDK), 70 to 102 (DDAGWSPLHIAASAGRDEIVKALLGKGAQVNAV), 103 to 135 (NQNGCTPLHYAASKNRHEIAVMLLEGGANPDAK), 136 to 168 (DHYEATAMHRAAAKGNLKMIHILLYYKASTNIQ), 169 to 201 (DTEGNTPLHLACDEERVEEAKLLVSQGASIYIE), and 202 to 226 (NKEEKTPLQVAKGGLGLILKRMVEG). Residues 39 to 226 (DSRTALHWAC…GLILKRMVEG (188 aa)) form an interaction with RELA region. An interaction with RB1 region spans residues 171–226 (EGNTPLHLACDEERVEEAKLLVSQGASIYIENKEEKTPLQVAKGGLGLILKRMVEG).

As to quaternary structure, part of transient complex containing PSMD10, PSMC4, PSMC5 and PAAF1 formed during the assembly of the 26S proteasome. Stays associated throughout the assembly of the PA700/19S RC and is released upon association with the 20S core. Interacts with PSMC4. Interacts with RB1. Interacts with CDK4. Interacts with MDM2. Interacts with RELA. Associates with a CDK4:CCND2 serine/threonine kinase complex. Interacts with ARHGDIA and increases the interaction between ARHGDIA and RHOA, hence promotes ARHGDIA inactivation of RHOA and ROCK. As to expression, tends to be up-regulated in cancer cells with RAS mutations, including lung cancers and adenocarconimas (at protein level).

Its subcellular location is the cytoplasm. It localises to the nucleus. In terms of biological role, acts as a chaperone during the assembly of the 26S proteasome, specifically of the PA700/19S regulatory complex (RC). In the initial step of the base subcomplex assembly is part of an intermediate PSMD10:PSMC4:PSMC5:PAAF1 module which probably assembles with a PSMD5:PSMC2:PSMC1:PSMD2 module. Independently of the proteasome, regulates EGF-induced AKT activation through inhibition of the RHOA/ROCK/PTEN pathway, leading to prolonged AKT activation. Plays an important role in RAS-induced tumorigenesis. Acts as an proto-oncoprotein by being involved in negative regulation of tumor suppressors RB1 and p53/TP53. Overexpression is leading to phosphorylation of RB1 and proteasomal degradation of RB1. Regulates CDK4-mediated phosphorylation of RB1 by competing with CDKN2A for binding with CDK4. Facilitates binding of MDM2 to p53/TP53 and the mono- and polyubiquitination of p53/TP53 by MDM2 suggesting a function in targeting the TP53:MDM2 complex to the 26S proteasome. Involved in p53-independent apoptosis. Involved in regulation of NF-kappa-B by retaining it in the cytoplasm. Binds to the NF-kappa-B component RELA and accelerates its XPO1/CRM1-mediated nuclear export. In Homo sapiens (Human), this protein is 26S proteasome non-ATPase regulatory subunit 10 (PSMD10).